The sequence spans 870 residues: Endoribonuclease YSH1 (870 aa).

The Zn(2+) site is built by H159, H161, D163, H164, H256, and D277. The active-site Proton donor is H499. H521 provides a ligand contact to Zn(2+). The interval 598–627 (ITELTEEKEEADEIKEDNGETDTTQKPNES) is disordered. The segment covering 601–612 (LTEEKEEADEIK) has biased composition (acidic residues). Positions 618–627 (TDTTQKPNES) are enriched in polar residues.

Belongs to the metallo-beta-lactamase superfamily. RNA-metabolizing metallo-beta-lactamase-like family. CPSF2/YSH1 subfamily.

The protein localises to the nucleus. Functionally, component of the cleavage factor I (CF I) involved in pre-mRNA 3'-end processing. This chain is Endoribonuclease YSH1 (YSH1), found in Candida albicans (strain SC5314 / ATCC MYA-2876) (Yeast).